A 106-amino-acid polypeptide reads, in one-letter code: Thioredoxin (106 aa).

In terms of domain architecture, Thioredoxin spans 2–106 (VNFLKTKADF…GLREKIKKNK (105 aa)). Residues cysteine 32 and cysteine 35 each act as nucleophile in the active site. Cysteine 32 and cysteine 35 are joined by a disulfide.

Belongs to the thioredoxin family.

The protein resides in the cytoplasm. In terms of biological role, participates in various redox reactions through the reversible oxidation of its active center dithiol to a disulfide and catalyzes dithiol-disulfide exchange reactions. The protein is Thioredoxin (THIO) of Geodia cydonium (Sponge).